Consider the following 370-residue polypeptide: Platelet-derived growth factor D (370 aa).

The signal sequence occupies residues 1–23 (MHRLILVSILVCANFCCYRDTFA). Residues 52 to 170 (RDENIRVTGT…PGFKIYYSFV (119 aa)) enclose the CUB domain. A disulfide bridge links Cys109 with Cys131. Asn276 carries N-linked (GlcNAc...) asparagine glycosylation. Intrachain disulfides connect Cys302-Cys360 and Cys306-Cys362.

This sequence belongs to the PDGF/VEGF growth factor family. Homodimer; disulfide-linked. Interacts with PDGFRB homodimers, and with heterodimers formed by PDGFRA and PDGFRB. In terms of processing, activated by proteolytic cleavage. Proteolytic removal of the N-terminal CUB domain releasing the core domain is necessary for unmasking the receptor-binding epitopes of the core domain. Cleavage after Arg-247 or Arg-249 by urokinase plasminogen activator gives rise to the active form. In terms of tissue distribution, widely expressed. Expressed at high levels in the kidney, adrenal glands, eye and CNS. In the kidney the localization is confined to arterial and arteriolar vascular smooth muscle cells and is also detected at low levels in the glomeruli In the eye in the anterior segment it is localized to the iris and ciliary body. In the retina localizes intensely to the outer plexiform layer, which contains photoreceptor axons and the synaptic layer between photoreceptors and second order neurons. In the spinal cord, prominently expressed in the motorneurons.

The protein resides in the secreted. Growth factor that plays an essential role in the regulation of embryonic development, cell proliferation, cell migration, survival and chemotaxis. Potent mitogen for cells of mesenchymal origin. Plays an important role in wound healing. Induces macrophage recruitment, increased interstitial pressure, and blood vessel maturation during angiogenesis. May play an important role in control of lens epithelial cell proliferation. Can initiate events that lead to a mesangial proliferative glomerulonephritis, including influx of monocytes and macrophages and production of extracellular matrix. This is Platelet-derived growth factor D (Pdgfd) from Rattus norvegicus (Rat).